The chain runs to 385 residues: WD repeat-containing protein 74 (385 aa).

WD repeat units follow at residues 40–80, 83–122, 128–168, 179–220, 224–266, and 267–306; these read RREE…FQGQ, CPGG…ASSD, RVGP…EPLF, DLRV…RRPV, TYGE…GCLK, and GLAG…GLEH. At Ser-214 the chain carries Phosphoserine. An N6-methyllysine modification is found at Lys-311. Residues 320–385 form a required for nucleolar and nuclear location region; the sequence is SGRDNWEDEP…KKKRPGSTSS (66 aa). Positions 323–385 are disordered; that stretch reads DNWEDEPQEP…KKKRPGSTSS (63 aa). Over residues 372 to 385 the composition is skewed to basic residues; sequence ARRRKKKRPGSTSS.

Isoform 1 interacts (through WDR repeats) with NVL; the interaction is independent of RNA or pre-60S ribosome particles. Isoform 2 does not interact with NVL. Interacts with MTREX; the interaction dissociation in a late stage of rRNA synthesis is required for appropriate maturation of pre-60S particles and depends on the ATPase activity of NVL.

It is found in the nucleus. The protein localises to the nucleolus. In terms of biological role, regulatory protein of the MTREX-exosome complex involved in the synthesis of the 60S ribosomal subunit. Participates in an early cleavage of the pre-rRNA processing pathway in cooperation with NVL. The sequence is that of WD repeat-containing protein 74 (WDR74) from Bos taurus (Bovine).